Consider the following 311-residue polypeptide: MVDALNVGVNLEAFSQAIHCIQALRSSVTRVFDCLKDGMKNKESQEARERTFVSEFQDNLHSVNGDLNELERLSNLVGKPSENLPLHNSGLLSLDPVHDKTPLYSQLLQAYKWSNKLQFHAGLASGLLNQQSLKRSAIQMGVSTKRRPKVQPTTLALPPQYIDDVISRIDRMFPEMTIQLSRPNGSSAILLVILGKVLKVIVVMRSLFIDRTIVKGYTENVYTEDGKLDIWSKSNYQVFQKVTDHATTALLHYQLPQMPDVVVRSFMTWLRSYIKLFQAPCQRCGKFLQDGLPPTWRDFRTLESFHDSCRQ.

Belongs to the Mediator complex subunit 27 family. As to quaternary structure, component of the Mediator complex.

It is found in the nucleus. Component of the Mediator complex, a coactivator involved in the regulated transcription of nearly all RNA polymerase II-dependent genes. Mediator functions as a bridge to convey information from gene-specific regulatory proteins to the basal RNA polymerase II transcription machinery. Mediator is recruited to promoters by direct interactions with regulatory proteins and serves as a scaffold for the assembly of a functional preinitiation complex with RNA polymerase II and the general transcription factors. The chain is Mediator of RNA polymerase II transcription subunit 27-B (med27-b) from Xenopus laevis (African clawed frog).